Consider the following 141-residue polypeptide: Nucleoside diphosphate kinase (141 aa).

ATP-binding residues include K11, F59, R87, T93, R104, and N114. H117 (pros-phosphohistidine intermediate) is an active-site residue.

This sequence belongs to the NDK family. In terms of assembly, homotetramer. Mg(2+) is required as a cofactor.

The protein resides in the cytoplasm. It carries out the reaction a 2'-deoxyribonucleoside 5'-diphosphate + ATP = a 2'-deoxyribonucleoside 5'-triphosphate + ADP. The enzyme catalyses a ribonucleoside 5'-diphosphate + ATP = a ribonucleoside 5'-triphosphate + ADP. Functionally, major role in the synthesis of nucleoside triphosphates other than ATP. The ATP gamma phosphate is transferred to the NDP beta phosphate via a ping-pong mechanism, using a phosphorylated active-site intermediate. The polypeptide is Nucleoside diphosphate kinase (Acidovorax ebreus (strain TPSY) (Diaphorobacter sp. (strain TPSY))).